The primary structure comprises 228 residues: Cytochrome b6-f complex iron-sulfur subunit 1, chloroplastic (228 aa).

The N-terminal 49 residues, 1 to 49 (MASSTLSPVTQLCSSKSGLSSVSQCLLVKPMKINSHGLGKDKRMKVKCM), are a transit peptide targeting the chloroplast. Residues 72-92 (LLGALSLPTAGMLVPYGTFFV) form a helical membrane-spanning segment. Residues 115–211 (ASEWLKTHPP…ADIDDGKVVF (97 aa)) enclose the Rieske domain. Residues Cys-157, His-159, Cys-175, and His-178 each contribute to the [2Fe-2S] cluster site. A disulfide bond links Cys-162 and Cys-177.

Belongs to the Rieske iron-sulfur protein family. As to quaternary structure, the 4 large subunits of the cytochrome b6-f complex are cytochrome b6, subunit IV (17 kDa polypeptide, petD), cytochrome f and the Rieske protein, while the 4 small subunits are petG, petL, petM and petN. The complex functions as a dimer. Requires [2Fe-2S] cluster as cofactor.

It is found in the plastid. It localises to the chloroplast thylakoid membrane. It carries out the reaction 2 oxidized [plastocyanin] + a plastoquinol + 2 H(+)(in) = 2 reduced [plastocyanin] + a plastoquinone + 4 H(+)(out). Functionally, component of the cytochrome b6-f complex, which mediates electron transfer between photosystem II (PSII) and photosystem I (PSI), cyclic electron flow around PSI, and state transitions. The polypeptide is Cytochrome b6-f complex iron-sulfur subunit 1, chloroplastic (petC1) (Nicotiana tabacum (Common tobacco)).